The following is a 501-amino-acid chain: Chromosomal replication initiator protein DnaA (501 aa).

Residues 1–90 are domain I, interacts with DnaA modulators; it reads MSVELWQQCV…KRSSAPRAAP (90 aa). Residues 91-164 form a domain II region; the sequence is NAPLAAAASQ…QVEGALKHTS (74 aa). The segment covering 103–121 has biased composition (low complexity); sequence AAPVASTPAPAPSKSSAKK. The segment at 103–150 is disordered; it reads AAPVASTPAPAPSKSSAKKNAAENEEPSRDSFDPMAGASSQQAPIRAE. Residues 122 to 134 are compositionally biased toward basic and acidic residues; the sequence is NAAENEEPSRDSF. The interval 165-381 is domain III, AAA+ region; sequence YLNRTFTFEN…GALKRVIAHS (217 aa). Gly-209, Gly-211, Lys-212, and Thr-213 together coordinate ATP. The domain IV, binds dsDNA stretch occupies residues 382 to 501; sequence HFMGRDITIE…YKNLLRTLTT (120 aa).

The protein belongs to the DnaA family. Oligomerizes as a right-handed, spiral filament on DNA at oriC.

The protein localises to the cytoplasm. Plays an essential role in the initiation and regulation of chromosomal replication. ATP-DnaA binds to the origin of replication (oriC) to initiate formation of the DNA replication initiation complex once per cell cycle. Binds the DnaA box (a 9 base pair repeat at the origin) and separates the double-stranded (ds)DNA. Forms a right-handed helical filament on oriC DNA; dsDNA binds to the exterior of the filament while single-stranded (ss)DNA is stabiized in the filament's interior. The ATP-DnaA-oriC complex binds and stabilizes one strand of the AT-rich DNA unwinding element (DUE), permitting loading of DNA polymerase. After initiation quickly degrades to an ADP-DnaA complex that is not apt for DNA replication. Binds acidic phospholipids. The chain is Chromosomal replication initiator protein DnaA from Pseudomonas fluorescens (strain SBW25).